Reading from the N-terminus, the 310-residue chain is Homoserine kinase (310 aa).

Position 91 to 101 (91 to 101 (PIGSGLGSSAC)) interacts with ATP.

This sequence belongs to the GHMP kinase family. Homoserine kinase subfamily.

It is found in the cytoplasm. It carries out the reaction L-homoserine + ATP = O-phospho-L-homoserine + ADP + H(+). Its pathway is amino-acid biosynthesis; L-threonine biosynthesis; L-threonine from L-aspartate: step 4/5. Catalyzes the ATP-dependent phosphorylation of L-homoserine to L-homoserine phosphate. The chain is Homoserine kinase from Escherichia coli (strain SE11).